The following is a 771-amino-acid chain: Endoplasmin homolog (771 aa).

Positions 1–24 are cleaved as a signal peptide; the sequence is MANSSLLRVVLVALLLLGSVTVSA. Positions 63, 109, and 160 each coordinate ATP. N63 is a glycosylation site (N-linked (GlcNAc...) asparagine). The tract at residues 254-282 is disordered; sequence AATPESAAEERSLDEGAVEEDPDKEGDTQ. N-linked (GlcNAc...) asparagine glycans are attached at residues N306 and N402. Positions 727–771 are disordered; it reads ADDSLLPPDDAEYTVSDTETEEEEEQPKVDTNAHEEAETDGEGDL. Positions 752 to 762 are enriched in basic and acidic residues; it reads QPKVDTNAHEE. The Prevents secretion from ER motif lies at 768 to 771; it reads EGDL.

Belongs to the heat shock protein 90 family. In terms of assembly, homotetramer.

It localises to the endoplasmic reticulum. Functionally, molecular chaperone that functions in the processing and transport of secreted proteins. Required for the synthesis of lipophosphoglycan (LPG), a cell surface glycoconjugate. Necessary for the attachment of the galactosyl residue to the mannose within the phosphoglycan repeats of the nascent LPG chain. Also required for addition of phosphoglycan to acid phosphatase. Not required for normal growth. Has ATPase activity. Binds heparin with micromolar affinity which may facilitate infection of host cells. This is Endoplasmin homolog from Leishmania donovani.